A 397-amino-acid polypeptide reads, in one-letter code: Phosphonopyruvate decarboxylase (397 aa).

It belongs to the TPP enzyme family. Requires thiamine diphosphate as cofactor. The cofactor is Mg(2+).

The catalysed reaction is 3-phosphonopyruvate + H(+) = phosphonoacetaldehyde + CO2. It functions in the pathway secondary metabolite biosynthesis; bialaphos biosynthesis. In terms of biological role, involved in the biosynthesis of phosphinothricin tripeptide (PTT), also known as bialaphos (BA), a natural-product antibiotic and potent herbicide. Catalyzes the decarboxylation of phosphonopyruvate (PnPy) to generate phosphonoacetaldehyde (PnAA). This Streptomyces viridochromogenes (strain DSM 40736 / JCM 4977 / BCRC 1201 / Tue 494) protein is Phosphonopyruvate decarboxylase.